A 246-amino-acid chain; its full sequence is CD99 antigen-like protein 2 (246 aa).

A signal peptide spans 1-25 (MVARLTTLLVCLVFSLATLVQRGYG). The Extracellular segment spans residues 26–160 (DFDDFNLEDA…PGSGAVTDPG (135 aa)). The segment at 43–156 (KQSHFSTTTR…SQDDPGSGAV (114 aa)) is disordered. 2 stretches are compositionally biased toward low complexity: residues 49-58 (TTTRRTGTTR) and 71-81 (TTTTTKRPGTT). Positions 100–109 (DDRNDLDGPK) are enriched in basic and acidic residues. Ser153 is a glycosylation site (O-linked (Xyl...) (chondroitin sulfate) serine). A helical transmembrane segment spans residues 161-181 (TIAGLVSALAAALLGAVSGYL). The Cytoplasmic segment spans residues 182–246 (SYQHRKFCFS…EPLAPERPRI (65 aa)). The segment at 223–246 (APPVTDSTQHSQPTEPLAPERPRI) is disordered. Over residues 227–236 (TDSTQHSQPT) the composition is skewed to polar residues.

Belongs to the CD99 family. In terms of processing, O-glycosylated. In terms of tissue distribution, expressed predominantly in the ventral medullary surface of the brain, moderate expression in the cerebral cortex and cerebellum. Low expression in lung and kidney. No expression in heart, stomach, intestine and skeletal muscle.

The protein localises to the cell membrane. It localises to the cell junction. The protein resides in the secreted. Plays a role in a late step of leukocyte extravasation helping cells to overcome the endothelial basement membrane. Acts at the same site as, but independently of, PECAM1. Homophilic adhesion molecule, but these interactions may not be required for cell aggregation. This is CD99 antigen-like protein 2 (Cd99l2) from Rattus norvegicus (Rat).